The chain runs to 400 residues: MGLFTVVFTAIAALSAVDAAELLRSPNSKDIVPNSYLVVMKDSVSSADLDSHVSWVTDLHSESITKPGVKNLDGFKHSYKINGWHAYSGSFDSETLASILDNDQVDFVEHDRYVYIDGLVTQKDAPSWGLGRVSHRMNGTRDYVYDETAGSGITFYGVDTGIDIRHPDFGGRAVWGTNVVSGTGDNDRHGHGTHTAATATGTKYGLAKKANVVAVKALNDHGAGLWSNIMKALEWCVDDARKKNALGKAVLNLSISGGKVVAANQAITNAANAGIFVSVAAGNDNQDATNKSPASAENVCCAAASTIRDEKASISNYGSVVKLYAPGQGITSATPNNSTGVMTGTSMAAPHVGGVGATLMASKHIAPSAVCAELIKMATGAVRNPGANTTNKLLYNGSGQ.

Residues 1–19 (MGLFTVVFTAIAALSAVDA) form the signal peptide. The propeptide occupies 20–117 (AELLRSPNSK…VEHDRYVYID (98 aa)). The region spanning 35–116 (SYLVVMKDSV…FVEHDRYVYI (82 aa)) is the Inhibitor I9 domain. In terms of domain architecture, Peptidase S8 spans 127–400 (SWGLGRVSHR…NKLLYNGSGQ (274 aa)). Asn-138 carries N-linked (GlcNAc...) asparagine glycosylation. Catalysis depends on charge relay system residues Asp-159 and His-191. Residues Asn-252, Asn-336, and Asn-337 are each glycosylated (N-linked (GlcNAc...) asparagine). Ser-346 serves as the catalytic Charge relay system. N-linked (GlcNAc...) asparagine glycans are attached at residues Asn-388 and Asn-396.

Belongs to the peptidase S8 family.

The protein resides in the secreted. Functionally, secreted subtilisin-like serine protease with keratinolytic activity that contributes to pathogenicity. The polypeptide is Subtilisin-like protease 11 (SUB11) (Arthroderma gypseum (strain ATCC MYA-4604 / CBS 118893) (Microsporum gypseum)).